The sequence spans 335 residues: S-adenosylmethionine:tRNA ribosyltransferase-isomerase (335 aa).

Belongs to the QueA family. Monomer.

The protein resides in the cytoplasm. It catalyses the reaction 7-aminomethyl-7-carbaguanosine(34) in tRNA + S-adenosyl-L-methionine = epoxyqueuosine(34) in tRNA + adenine + L-methionine + 2 H(+). Its pathway is tRNA modification; tRNA-queuosine biosynthesis. Its function is as follows. Transfers and isomerizes the ribose moiety from AdoMet to the 7-aminomethyl group of 7-deazaguanine (preQ1-tRNA) to give epoxyqueuosine (oQ-tRNA). The protein is S-adenosylmethionine:tRNA ribosyltransferase-isomerase of Thermotoga petrophila (strain ATCC BAA-488 / DSM 13995 / JCM 10881 / RKU-1).